Reading from the N-terminus, the 363-residue chain is MKIVERLQVVLGERSYPISIGAGIIQEDDIFWPLKPGDQAMLVTNKTLANLLKDKVFYHLRKSGIKIDQVILSDGEQYKTLNEMELIISALLEKKHARDTTLIALGGGVIGDLAGFAASVYQRGVRFIQIPTTLLSQVDASVGGKTAVNHLLGKNMIGSFWQPSSVIIDIDCLKTLPYNELVSGMAEVIKYAIVFDKTFFCWLEENIESILSLNHTAMSYCIKKCCELKSQLIALDERENNLRALLNLGHTYGHAIEVHAGYGNWLHGEAISVGMVMAARTSELLGHLKTIDFKRILVLLKRTGLPIKGPKNMSAASYLPYMMRDKKVISGEMRLVLPLSIGKAEIYSNIDKNIILTAIKHSQ.

Residues 74-79 (DGEQYK), 108-112 (GVIGD), 132-133 (TT), Lys145, Lys154, and 172-175 (CLKT) each bind NAD(+). Zn(2+) contacts are provided by Glu187, His250, and His267.

It belongs to the sugar phosphate cyclases superfamily. Dehydroquinate synthase family. The cofactor is NAD(+). Co(2+) serves as cofactor. Zn(2+) is required as a cofactor.

The protein resides in the cytoplasm. It carries out the reaction 7-phospho-2-dehydro-3-deoxy-D-arabino-heptonate = 3-dehydroquinate + phosphate. It functions in the pathway metabolic intermediate biosynthesis; chorismate biosynthesis; chorismate from D-erythrose 4-phosphate and phosphoenolpyruvate: step 2/7. Functionally, catalyzes the conversion of 3-deoxy-D-arabino-heptulosonate 7-phosphate (DAHP) to dehydroquinate (DHQ). This chain is 3-dehydroquinate synthase, found in Buchnera aphidicola subsp. Acyrthosiphon pisum (strain APS) (Acyrthosiphon pisum symbiotic bacterium).